The primary structure comprises 200 residues: Phospholipase D (200 aa).

Positions 1 to 25 (MKRKNNKFIEISIAFILGVALGIYG) are cleaved as a signal peptide. Residues 142–169 (VPGIAHNKVIIIDRKKVITGSFNFTAAA) form the PLD phosphodiesterase domain. Residues His-147, Lys-149, and Asp-154 contribute to the active site.

This sequence belongs to the phospholipase D family. Homodimer.

It localises to the secreted. The catalysed reaction is a 1,2-diacyl-sn-glycero-3-phosphocholine + H2O = a 1,2-diacyl-sn-glycero-3-phosphate + choline + H(+). In terms of biological role, could be a virulence factor. The chain is Phospholipase D (pld) from Rickettsia felis (strain ATCC VR-1525 / URRWXCal2) (Rickettsia azadi).